Here is a 553-residue protein sequence, read N- to C-terminus: MENIISIVKKDLKEIAQKFNISKDPIVEINKNNIDSHFSTTLALMSAKELKQNPIQLAENIKNELLQKDYYDQIEIAGPGFINIKLKTELLSTTIKNITTLKEAYGKNKIKNKIINIEYVSANPTGFLHVGHARNAVTGSVLEEVLKFDGYEVQTEFYTNDAGNQINILAVTVFVHYLWALGIETEKPANTYGGTFYDDLANIMIQKYGDKFKNLTFTETAISDEETHQIFRKEAVQHFLTEIKQQLKDFGVVIDHYSSEQEMYDTNQIEKLLKEYKEKNATYEADGALWLKTTEFGDDKDRVLVKKDGSLTYIVPDLATHNIRIQRTHADVLINIWGGDHHGYIPRMRAGLQLLGHNPDILEIEMVQMVRLIKDGKEYKMSKRKGTAVWLVDIMEMVGKDALRYMLASKSSSSHMDLDLDLVQQKNATNPVYYAQYATARCHSILNQADQKNIKANLNVSNLLSNKKEVELLLTLDNFNQVIQMSAKNRAPQLICEYIQTVCKQFHSYYADTKILDENDVPTSEARLGLVLSVLQVLTNAFNIIGVSALETM.

The short motif at 122–132 (ANPTGFLHVGH) is the 'HIGH' region element.

The protein belongs to the class-I aminoacyl-tRNA synthetase family. As to quaternary structure, monomer.

It is found in the cytoplasm. It catalyses the reaction tRNA(Arg) + L-arginine + ATP = L-arginyl-tRNA(Arg) + AMP + diphosphate. The polypeptide is Arginine--tRNA ligase (Mesoplasma florum (strain ATCC 33453 / NBRC 100688 / NCTC 11704 / L1) (Acholeplasma florum)).